The sequence spans 292 residues: Cytidine deaminase (292 aa).

CMP/dCMP-type deaminase domains lie at 47 to 167 (TTLK…FGPK) and 186 to 292 (DHQD…YYSL). 88–90 (NQE) lines the substrate pocket. His-101 contributes to the Zn(2+) binding site. The active-site Proton donor is Glu-103. Zn(2+)-binding residues include Cys-128 and Cys-131.

This sequence belongs to the cytidine and deoxycytidylate deaminase family. Homodimer. The cofactor is Zn(2+).

It carries out the reaction cytidine + H2O + H(+) = uridine + NH4(+). The enzyme catalyses 2'-deoxycytidine + H2O + H(+) = 2'-deoxyuridine + NH4(+). This enzyme scavenges exogenous and endogenous cytidine and 2'-deoxycytidine for UMP synthesis. This chain is Cytidine deaminase, found in Haemophilus influenzae (strain ATCC 51907 / DSM 11121 / KW20 / Rd).